Here is a 774-residue protein sequence, read N- to C-terminus: Cilium assembly protein DZIP1L (774 aa).

The segment at histidine 166–histidine 189 adopts a C2H2-type zinc-finger fold. The stretch at leucine 204 to asparagine 450 forms a coiled coil. Disordered regions lie at residues methionine 415–glutamate 435, asparagine 515–glycine 674, and lysine 686–tryptophan 774. The span at threonine 421–serine 433 shows a compositional bias: acidic residues. 2 positions are modified to phosphoserine: serine 425 and serine 426. The segment covering asparagine 515–tryptophan 526 has biased composition (basic and acidic residues). A compositionally biased stretch (low complexity) spans glycine 597 to serine 616.

It belongs to the DZIP C2H2-type zinc-finger protein family. In terms of assembly, interacts with SEPTIN2.

Its subcellular location is the cytoplasm. The protein localises to the cytoskeleton. The protein resides in the cilium basal body. It is found in the microtubule organizing center. It localises to the centrosome. Its subcellular location is the centriole. Involved in primary cilium formation. Probably acts as a transition zone protein required for localization of PKD1/PC1 and PKD2/PC2 to the ciliary membrane. This is Cilium assembly protein DZIP1L from Mus musculus (Mouse).